The following is a 157-amino-acid chain: uncharacterized protein (157 aa).

The region spanning 9 to 147 (LLINYKTLDE…DFYVWHPEVN (139 aa)) is the N-acetyltransferase domain.

This is an uncharacterized protein from Bacillus cereus (strain 03BB102).